We begin with the raw amino-acid sequence, 164 residues long: Peptidyl-prolyl cis-trans isomerase B (164 aa).

Positions 1-162 (MVTFHTNHGD…EDVIIESVTV (162 aa)) constitute a PPIase cyclophilin-type domain.

It belongs to the cyclophilin-type PPIase family.

It is found in the cytoplasm. It carries out the reaction [protein]-peptidylproline (omega=180) = [protein]-peptidylproline (omega=0). With respect to regulation, inhibition by cyclosporin A with a Ki of 25 to 50 mu-mol, a concentration 1000-fold higher than that required for eukaryotic PPIases. PPIases accelerate the folding of proteins. It catalyzes the cis-trans isomerization of proline imidic peptide bonds in oligopeptides. This is Peptidyl-prolyl cis-trans isomerase B (ppiB) from Escherichia coli (strain K12).